Reading from the N-terminus, the 561-residue chain is uncharacterized protein (561 aa).

Residues 1–11 show a composition bias toward polar residues; the sequence is MSQVSLPSQLK. Disordered regions lie at residues 1 to 22 and 522 to 561; these read MSQV…SRCR and CSLP…IMLP. Over residues 541-561 the composition is skewed to low complexity; it reads QQPQQAQAEQAQQPQQQIMLP.

To Synechocystis PCC 6803 sll0335 and to M.tuberculosis Rv2567.

This is an uncharacterized protein from Mycobacterium leprae (strain TN).